Reading from the N-terminus, the 436-residue chain is UBX domain-containing protein 7 (436 aa).

A Glycyl lysine isopeptide (Lys-Gly) (interchain with G-Cter in ubiquitin) cross-link involves residue lysine 19. The tract at residues alanine 115–asparagine 141 is disordered. A UBX domain is found at leucine 212–leucine 290. Residues aspartate 325–arginine 346 are compositionally biased toward basic and acidic residues. Disordered regions lie at residues aspartate 325–serine 357 and serine 371–lysine 436. Positions serine 347–serine 357 are enriched in low complexity. The segment covering serine 371–asparagine 408 has biased composition (polar residues). Serine 388 is modified (phosphoserine). Over residues histidine 426 to lysine 436 the composition is skewed to basic and acidic residues.

In terms of assembly, interacts with CDC48.

It is found in the endoplasmic reticulum. Its function is as follows. Involved in CDC48-dependent protein degradation through the ubiquitin/proteasome pathway. The polypeptide is UBX domain-containing protein 7 (UBX7) (Saccharomyces cerevisiae (strain ATCC 204508 / S288c) (Baker's yeast)).